The following is a 152-amino-acid chain: D-aminoacyl-tRNA deacylase (152 aa).

The short motif at 142–143 (GP) is the Gly-cisPro motif, important for rejection of L-amino acids element.

The protein belongs to the DTD family. In terms of assembly, homodimer.

Its subcellular location is the cytoplasm. The catalysed reaction is glycyl-tRNA(Ala) + H2O = tRNA(Ala) + glycine + H(+). The enzyme catalyses a D-aminoacyl-tRNA + H2O = a tRNA + a D-alpha-amino acid + H(+). An aminoacyl-tRNA editing enzyme that deacylates mischarged D-aminoacyl-tRNAs. Also deacylates mischarged glycyl-tRNA(Ala), protecting cells against glycine mischarging by AlaRS. Acts via tRNA-based rather than protein-based catalysis; rejects L-amino acids rather than detecting D-amino acids in the active site. By recycling D-aminoacyl-tRNA to D-amino acids and free tRNA molecules, this enzyme counteracts the toxicity associated with the formation of D-aminoacyl-tRNA entities in vivo and helps enforce protein L-homochirality. This Burkholderia mallei (strain NCTC 10247) protein is D-aminoacyl-tRNA deacylase.